The sequence spans 263 residues: Superoxide dismutase [Fe] 3, chloroplastic (263 aa).

Residues 1–41 constitute a chloroplast transit peptide; it reads MSSCVVTTSCFYTISDSSIRLKSPKLLNLSNQQRRRSLRSR. Fe cation-binding residues include histidine 74, histidine 127, aspartate 211, and histidine 215.

The protein belongs to the iron/manganese superoxide dismutase family. As to quaternary structure, homodimer. Heterodimer with FSD2. Interacts with MRL7. Fe cation serves as cofactor.

Its subcellular location is the plastid. It localises to the chloroplast thylakoid. It catalyses the reaction 2 superoxide + 2 H(+) = H2O2 + O2. Activated by cpn20/cpn21 (in vitro). In terms of biological role, destroys superoxide anion radicals which are normally produced within the cells and which are toxic to biological systems. Plays important role in chloroplast development, particularly in the maintenance of thylakoids membranes. Seems to act as a heterodimer with FSD2. The protein is Superoxide dismutase [Fe] 3, chloroplastic of Arabidopsis thaliana (Mouse-ear cress).